The sequence spans 375 residues: MVLPLILTLVIVAPIFLWMYSWYISAIPKHYVKPGTKLQKKVHSNLRILEQKYHPSWWCPFGTTQTVVRQIFRDCPSLPFTREIVEFDDGGAAGIDWLIPEGADDTTPIVVFLPGITGSTHDSSYVLHPVKEARDKGWKCVVVNPRGLGGVKLRTTRTYNAATPHDFAFIAKMINERYPDAKKLGCGFSMGGMILWNYLAMTGENADLDGGMIVSSPWDPLVASDSIECFIPQLIFNSFIAKNLVDMVRPYRELFKDMVDFDEVCRCNTVRGFDRSFVIPMYGFKSCDDYYRQATLATKVDKIKIPCVTLNSVDDYFSPVECIPTLDIMESDYVCGIITNHGGHTAFMESADPNARGMVEKLLSQWGNMIFHDYS.

The AB hydrolase-1 domain maps to 108–203 (PIVVFLPGIT…ILWNYLAMTG (96 aa)). Active-site charge relay system residues include Ser189, Asp315, and His344.

Belongs to the AB hydrolase superfamily. AB hydrolase 4 family.

The sequence is that of Protein abhd-3.2 from Caenorhabditis elegans.